Consider the following 1331-residue polypeptide: Contactin-associated protein-like 2 (1331 aa).

A signal peptide spans 1–27; that stretch reads MLAAPRAGCGAALLLWIVSSCLCRAWT. Residues 28–1262 are Extracellular-facing; the sequence is APSTSQKCDE…IRNGVNRNSA (1235 aa). Residues 35–181 form the F5/8 type C domain; sequence CDEPLVSGLP…IGLRIEVYGC (147 aa). Cysteine 35 and cysteine 181 are disulfide-bonded. Laminin G-like domains lie at 187–368 and 373–552; these read VINF…SFSC and TVPV…IDMC. N-linked (GlcNAc...) asparagine glycosylation is found at asparagine 289, asparagine 346, asparagine 363, asparagine 379, asparagine 436, asparagine 506, asparagine 507, and asparagine 546. A disulfide bond links cysteine 336 and cysteine 368. 4 cysteine pairs are disulfide-bonded: cysteine 520–cysteine 552, cysteine 558–cysteine 569, cysteine 563–cysteine 578, and cysteine 580–cysteine 590. An EGF-like 1 domain is found at 554–591; sequence IIDRCVPNHCERGGKCSQTWDSFKCTCDETGYTGATCH. A Fibrinogen C-terminal domain is found at 592–798; that stretch reads NSIYEPSCEA…LRCQGDRNYW (207 aa). N-linked (GlcNAc...) asparagine glycosylation is found at asparagine 630 and asparagine 735. One can recognise a Laminin G-like 3 domain in the interval 799-963; it reads NAASFPNPSS…KVTSGFISGC (165 aa). Cystine bridges form between cysteine 936/cysteine 963, cysteine 967/cysteine 980, cysteine 974/cysteine 989, and cysteine 991/cysteine 1001. The EGF-like 2 domain maps to 964 to 1002; sequence SGHCTSYGTNCENGGKCLERYHGYSCDCSNTAYDGTFCN. In terms of domain architecture, Laminin G-like 4 spans 1023-1214; that stretch reads ATNARDSSSR…IQGELVESNC (192 aa). Asparagine 1116 and asparagine 1198 each carry an N-linked (GlcNAc...) asparagine glycan. An intrachain disulfide couples cysteine 1178 to cysteine 1214. A helical membrane pass occupies residues 1263–1283; that stretch reads IIGGVIAVVIFTILCTLVFLI. Topologically, residues 1284–1331 are cytoplasmic; the sequence is RYMFRHKGTYHTNEAKGAESAESADAAIMNNDPNFTETIDESKKEWLI. Serine 1303 and serine 1306 each carry phosphoserine.

It belongs to the neurexin family. In terms of assembly, interacts (via C-terminus) with KCNA2.

It is found in the membrane. The protein localises to the cell projection. The protein resides in the axon. Its subcellular location is the cell junction. It localises to the paranodal septate junction. In terms of biological role, required for gap junction formation. Required, with CNTNAP1, for radial and longitudinal organization of myelinated axons. Plays a role in the formation of functional distinct domains critical for saltatory conduction of nerve impulses in myelinated nerve fibers. Demarcates the juxtaparanodal region of the axo-glial junction. In Pongo abelii (Sumatran orangutan), this protein is Contactin-associated protein-like 2 (CNTNAP2).